The primary structure comprises 671 residues: TBC1 domain family member 15 (671 aa).

The residue at position 2 (Ala-2) is an N-acetylalanine. 5 positions are modified to phosphoserine: Ser-23, Ser-32, Ser-70, Ser-205, and Ser-257. One can recognise a Rab-GAP TBC domain in the interval 329-539; it reads GLSHSLRKQA…RLWEVMWTEL (211 aa). Phosphoserine occurs at positions 623 and 655. The segment at 650–671 is disordered; it reads EAKDDSPTQTLASPNACRLTPA. Thr-669 is subject to Phosphothreonine.

In terms of assembly, interacts with non-phosphorylated form of RAB8A; phosphorylation of RAB8A at 'Thr-72' disrupts this interaction. Interacts with ARMC12. Ubiquitous, with highest expression in heart, liver and testis and lower expression in brain, spleen, lung, kidney and skeletal muscle.

The protein resides in the cytoplasm. Functionally, acts as a GTPase activating protein for RAB7A. Does not act on RAB4, RAB5 or RAB6. The protein is TBC1 domain family member 15 (Tbc1d15) of Mus musculus (Mouse).